Reading from the N-terminus, the 414-residue chain is Argininosuccinate synthase (414 aa).

12–20 is a binding site for ATP; sequence AYSGGLDTS. L-citrulline contacts are provided by Tyr90 and Ser95. Gly120 serves as a coordination point for ATP. L-aspartate-binding residues include Thr122, Asn126, and Asp127. Residue Asn126 participates in L-citrulline binding. L-citrulline contacts are provided by Arg130, Ser179, Ser188, Glu264, and Tyr276.

This sequence belongs to the argininosuccinate synthase family. Type 1 subfamily. As to quaternary structure, homotetramer.

It is found in the cytoplasm. The catalysed reaction is L-citrulline + L-aspartate + ATP = 2-(N(omega)-L-arginino)succinate + AMP + diphosphate + H(+). It participates in amino-acid biosynthesis; L-arginine biosynthesis; L-arginine from L-ornithine and carbamoyl phosphate: step 2/3. In Alkaliphilus metalliredigens (strain QYMF), this protein is Argininosuccinate synthase.